A 533-amino-acid polypeptide reads, in one-letter code: Retinoic acid receptor RXR-beta (533 aa).

Residues 1 to 24 form a disordered region; the sequence is MSWAARPPFLPQRHAAGQCGPVGV. The segment at 1–204 is modulating; sequence MSWAARPPFL…PGGPGAGKRL (204 aa). R25 carries the post-translational modification Omega-N-methylarginine. The segment at 37 to 183 is disordered; that stretch reads RRRRPWLDPA…GPPEDVKPPV (147 aa). Residues 46-61 are compositionally biased toward low complexity; that stretch reads AAAAAAAAAAGEQQTP. The span at 67-82 shows a compositional bias: basic and acidic residues; that stretch reads EAGRDGMGDSGRDSRS. The span at 83-94 shows a compositional bias: low complexity; that stretch reads PDSSSPNPLSQG. 2 stretches are compositionally biased toward pro residues: residues 95 to 109 and 118 to 129; these read APPP…PPSS and APPPPPMPPPQL. Residues 130–143 show a composition bias toward low complexity; the sequence is GSPFPVISSSMGSP. Over residues 144–153 the composition is skewed to pro residues; it reads GLPPPAPPGF. NR C4-type zinc fingers lie at residues 205–225 and 241–265; these read CAIC…CEGC and CRDN…YQKC. The nuclear receptor DNA-binding region spans 205–270; the sequence is CAICGDRSSG…RYQKCLATGM (66 aa). Residues 271–295 form a hinge region; that stretch reads KREAVQEERQRGKDKDGDGEGAGGA. The span at 276–288 shows a compositional bias: basic and acidic residues; that stretch reads QEERQRGKDKDGD. Disordered regions lie at residues 276–299 and 313–336; these read QEER…PEEM and QKSD…NDPV. The NR LBD domain maps to 296-529; it reads PEEMPVDRIL…TFLMEMLEAP (234 aa). Positions 320 to 329 are enriched in gly residues; sequence EGPGGTGGSG.

The protein belongs to the nuclear hormone receptor family. NR2 subfamily. Homodimer (in vitro). Heterodimer with other retinoic acid receptor family members. Binds DNA preferentially as a RAR/RXR heterodimer. Interacts with NR1H3. Interacts with AKAP13.

The protein localises to the nucleus. It is found in the cytoplasm. Functionally, receptor for retinoic acid. Retinoic acid receptors bind as heterodimers to their target response elements in response to their ligands, all-trans or 9-cis retinoic acid, and regulate gene expression in various biological processes. The RAR/RXR heterodimers bind to the retinoic acid response elements (RARE). The polypeptide is Retinoic acid receptor RXR-beta (RXRB) (Canis lupus familiaris (Dog)).